We begin with the raw amino-acid sequence, 348 residues long: Holliday junction branch migration complex subunit RuvB (348 aa).

The segment at 3–183 is large ATPase domain (RuvB-L); that stretch reads DDGLVSAAAS…FGFTAHLDFY (181 aa). ATP-binding positions include Leu22, Arg23, Gly64, Lys67, Thr68, Ser69, 130–132, Arg173, Tyr183, and Arg220; that span reads EDF. Thr68 is a Mg(2+) binding site. The interval 184–254 is small ATPAse domain (RuvB-S); sequence DADELARVLT…IAQAALRIYD (71 aa). The head domain (RuvB-H) stretch occupies residues 257–348; that stretch reads GLGLDRLDRA…TQVSLFTEGE (92 aa). The DNA site is built by Arg312 and Arg317.

This sequence belongs to the RuvB family. In terms of assembly, homohexamer. Forms an RuvA(8)-RuvB(12)-Holliday junction (HJ) complex. HJ DNA is sandwiched between 2 RuvA tetramers; dsDNA enters through RuvA and exits via RuvB. An RuvB hexamer assembles on each DNA strand where it exits the tetramer. Each RuvB hexamer is contacted by two RuvA subunits (via domain III) on 2 adjacent RuvB subunits; this complex drives branch migration. In the full resolvosome a probable DNA-RuvA(4)-RuvB(12)-RuvC(2) complex forms which resolves the HJ.

The protein localises to the cytoplasm. The catalysed reaction is ATP + H2O = ADP + phosphate + H(+). The RuvA-RuvB-RuvC complex processes Holliday junction (HJ) DNA during genetic recombination and DNA repair, while the RuvA-RuvB complex plays an important role in the rescue of blocked DNA replication forks via replication fork reversal (RFR). RuvA specifically binds to HJ cruciform DNA, conferring on it an open structure. The RuvB hexamer acts as an ATP-dependent pump, pulling dsDNA into and through the RuvAB complex. RuvB forms 2 homohexamers on either side of HJ DNA bound by 1 or 2 RuvA tetramers; 4 subunits per hexamer contact DNA at a time. Coordinated motions by a converter formed by DNA-disengaged RuvB subunits stimulates ATP hydrolysis and nucleotide exchange. Immobilization of the converter enables RuvB to convert the ATP-contained energy into a lever motion, pulling 2 nucleotides of DNA out of the RuvA tetramer per ATP hydrolyzed, thus driving DNA branch migration. The RuvB motors rotate together with the DNA substrate, which together with the progressing nucleotide cycle form the mechanistic basis for DNA recombination by continuous HJ branch migration. Branch migration allows RuvC to scan DNA until it finds its consensus sequence, where it cleaves and resolves cruciform DNA. The protein is Holliday junction branch migration complex subunit RuvB of Frankia casuarinae (strain DSM 45818 / CECT 9043 / HFP020203 / CcI3).